Here is a 282-residue protein sequence, read N- to C-terminus: Keratin-associated protein 10-1 (282 aa).

24 repeat units span residues 26–30 (CCEPH), 31–35 (CCALS), 36–40 (CCAPA), 57–61 (CCQAA), 79–83 (CCQQS), 89–93 (CCTSS), 99–103 (CCVPV), 104–108 (CCKPV), 109–113 (CCLPT), 121–125 (CCQQS), 131–135 (CCASS), 141–145 (CCVPV), 146–150 (CCKPV), 163–167 (CCQQS), 173–177 (CCTSS), 183–187 (CCVPV), 193–197 (CCKPI), 198–202 (CCVPV), 210–214 (CCQQS), 220–224 (CCTTS), 225–229 (CCRPS), 244–248 (CCMPV), 251–255 (CCAPA), and 262–266 (CCRPA). Positions 26–266 (CCEPHCCALS…SCQASCCRPA (241 aa)) are 24 X 5 AA repeats of C-C-X(3).

It belongs to the KRTAP type 10 family. Interacts with hair keratins. As to expression, restricted to a narrow region of the hair fiber cuticle, lying approximately 20 cell layers above the apex of the dermal papilla of the hair root; not detected in any other tissues.

Its function is as follows. In the hair cortex, hair keratin intermediate filaments are embedded in an interfilamentous matrix, consisting of hair keratin-associated proteins (KRTAP), which are essential for the formation of a rigid and resistant hair shaft through their extensive disulfide bond cross-linking with abundant cysteine residues of hair keratins. The matrix proteins include the high-sulfur and high-glycine-tyrosine keratins. This Homo sapiens (Human) protein is Keratin-associated protein 10-1 (KRTAP10-1).